The following is a 628-amino-acid chain: MBT domain-containing protein 1 (628 aa).

Residues 1 to 31 (MFDGYDSCSEDTSSSSSSEESEEEVAPLPSN) are disordered. Residues 45–80 (PDGKSGMATCEMCGMVGVRDAFYSKTKRFCSVSCSR) form an FCS-type zinc finger. C54, C57, C74, and C78 together coordinate Zn(2+). N6-acetyllysine is present on K115. MBT repeat units lie at residues 141–245 (FSWG…LVPP), 253–350 (TNWK…IGHR), 351–456 (FKRS…LTPP), and 464–560 (FKWF…LQPP). 2 disordered regions span residues 560 to 590 (PASQSSRENQSASSKQKKKAKSQQYKGHKKM) and 606 to 628 (NFLQGASDQESNGSANFYIKQEP). The span at 562-573 (SQSSRENQSASS) shows a compositional bias: low complexity. A compositionally biased stretch (basic residues) spans 574–590 (KQKKKAKSQQYKGHKKM). Residues 609–620 (QGASDQESNGSA) show a composition bias toward polar residues.

Monomer. Component of the NuA4 histone acetyltransferase complex. Interacts with EPC1; interaction is direct and promotes recruitment of MBTD1 into the NuA4 histone acetyltransferase complex.

The protein resides in the nucleus. It localises to the chromosome. Its function is as follows. Chromatin reader component of the NuA4 histone acetyltransferase complex, a multiprotein complex involved in transcriptional activation of select genes principally by acetylation of nucleosomal histones H4 and H2A. The NuA4 complex plays a direct role in repair of DNA double-strand breaks (DSBs) by promoting homologous recombination (HR). MBTD1 specifically recognizes and binds monomethylated and dimethylated 'Lys-20' on histone H4 (H4K20me1 and H4K20me2, respectively). In the NuA4 complex, MBTD1 promotes recruitment of the complex to H4K20me marks by competing with TP53BP1 for binding to H4K20me. Following recruitment to H4K20me at DNA breaks, the NuA4 complex catalyzes acetylation of 'Lys-15' on histone H2A (H2AK15), blocking the ubiquitination mark required for TP53BP1 localization at DNA breaks, thereby promoting homologous recombination (HR). This chain is MBT domain-containing protein 1, found in Homo sapiens (Human).